The following is a 66-amino-acid chain: Large ribosomal subunit protein bL31 (66 aa).

Residues Cys-16, Cys-18, Cys-36, and Cys-39 each contribute to the Zn(2+) site.

It belongs to the bacterial ribosomal protein bL31 family. Type A subfamily. In terms of assembly, part of the 50S ribosomal subunit. Zn(2+) is required as a cofactor.

In terms of biological role, binds the 23S rRNA. In Campylobacter lari (strain RM2100 / D67 / ATCC BAA-1060), this protein is Large ribosomal subunit protein bL31.